The following is a 142-amino-acid chain: Hemoglobin subunit alpha-1 (142 aa).

The 141-residue stretch at 2–142 (VLSPADKTNV…VSTVLTSKYR (141 aa)) folds into the Globin domain. His59 contacts O2. Position 88 (His88) interacts with heme b.

The protein belongs to the globin family. As to quaternary structure, heterotetramer of two alpha chains and two beta chains. In terms of tissue distribution, red blood cells.

Involved in oxygen transport from the lung to the various peripheral tissues. Its function is as follows. Hemopressin acts as an antagonist peptide of the cannabinoid receptor CNR1. Hemopressin-binding efficiently blocks cannabinoid receptor CNR1 and subsequent signaling. This Hylobates lar (Lar gibbon) protein is Hemoglobin subunit alpha-1 (HBA1).